Reading from the N-terminus, the 344-residue chain is MNHAITMGIFWHLIGAASAACFYAPFKKVKHWSWETMWSVGGIVSWLILPWAISATLLPDFWAYYRSFNASTLLPVFLFGAMWGIGNINYGLTMRYLGMSMGIGIAIGITLIVGTLMTPIINGQFSVLMHTQGGQMTLLGVLVAVIGVGIVTRAGQLKERKMGIKAEEFNLKKGLLLAVMCGIFSAGMSFAMNAAKPMHDAAAALGVDPLYAALPSYVVIMGGGALVNLGFCFIRLAKVKNLSVKADFSLAKPLIISNLLLSALGGLMWYLQFFFYAWGHASIPAQYDYMSWMLHMSFYVLCGGLVGLVLKEWNNAGRRPVSVLSLGCVVIIIAANIVGLGMAS.

Transmembrane regions (helical) follow at residues A4–A24, W38–L58, T72–L92, M101–I121, T131–V151, L175–A195, L214–I234, L259–G279, M290–L310, and V323–A343.

This sequence belongs to the L-rhamnose transporter (TC 2.A.7.6) family.

Its subcellular location is the cell inner membrane. It catalyses the reaction L-rhamnopyranose(in) + H(+)(in) = L-rhamnopyranose(out) + H(+)(out). Its function is as follows. Uptake of L-rhamnose across the cytoplasmic membrane with the concomitant transport of protons into the cell (symport system). The protein is L-rhamnose-proton symporter of Klebsiella pneumoniae (strain 342).